Here is a 133-residue protein sequence, read N- to C-terminus: Phosphoribosyl-ATP pyrophosphatase (133 aa).

The disordered stretch occupies residues 1–22; that stretch reads MGKPATKPAPKPSKQQDDKKSD.

The protein belongs to the PRA-PH family.

The protein localises to the cytoplasm. It catalyses the reaction 1-(5-phospho-beta-D-ribosyl)-ATP + H2O = 1-(5-phospho-beta-D-ribosyl)-5'-AMP + diphosphate + H(+). It participates in amino-acid biosynthesis; L-histidine biosynthesis; L-histidine from 5-phospho-alpha-D-ribose 1-diphosphate: step 2/9. In Gluconobacter oxydans (strain 621H) (Gluconobacter suboxydans), this protein is Phosphoribosyl-ATP pyrophosphatase.